The following is a 434-amino-acid chain: Serine hydroxymethyltransferase 1 (434 aa).

Residues Leu136 and 140–142 each bind (6S)-5,6,7,8-tetrahydrofolate; that span reads GHL. An N6-(pyridoxal phosphate)lysine modification is found at Lys245.

Belongs to the SHMT family. In terms of assembly, homodimer. Pyridoxal 5'-phosphate is required as a cofactor.

Its subcellular location is the cytoplasm. The enzyme catalyses (6R)-5,10-methylene-5,6,7,8-tetrahydrofolate + glycine + H2O = (6S)-5,6,7,8-tetrahydrofolate + L-serine. The protein operates within one-carbon metabolism; tetrahydrofolate interconversion. It participates in amino-acid biosynthesis; glycine biosynthesis; glycine from L-serine: step 1/1. Functionally, catalyzes the reversible interconversion of serine and glycine with tetrahydrofolate (THF) serving as the one-carbon carrier. This reaction serves as the major source of one-carbon groups required for the biosynthesis of purines, thymidylate, methionine, and other important biomolecules. Also exhibits THF-independent aldolase activity toward beta-hydroxyamino acids, producing glycine and aldehydes, via a retro-aldol mechanism. This is Serine hydroxymethyltransferase 1 from Rhodospirillum rubrum (strain ATCC 11170 / ATH 1.1.1 / DSM 467 / LMG 4362 / NCIMB 8255 / S1).